The primary structure comprises 273 residues: Formamidopyrimidine-DNA glycosylase (273 aa).

P2 serves as the catalytic Schiff-base intermediate with DNA. Residue E3 is the Proton donor of the active site. K60 functions as the Proton donor; for beta-elimination activity in the catalytic mechanism. H94, R113, and R154 together coordinate DNA. An FPG-type zinc finger spans residues 239–273 (NAYDREGQPCPRCGATIIKTVVAQRGTHYCPECQR). R263 serves as the catalytic Proton donor; for delta-elimination activity.

Belongs to the FPG family. As to quaternary structure, monomer. Zn(2+) is required as a cofactor.

The catalysed reaction is Hydrolysis of DNA containing ring-opened 7-methylguanine residues, releasing 2,6-diamino-4-hydroxy-5-(N-methyl)formamidopyrimidine.. The enzyme catalyses 2'-deoxyribonucleotide-(2'-deoxyribose 5'-phosphate)-2'-deoxyribonucleotide-DNA = a 3'-end 2'-deoxyribonucleotide-(2,3-dehydro-2,3-deoxyribose 5'-phosphate)-DNA + a 5'-end 5'-phospho-2'-deoxyribonucleoside-DNA + H(+). Functionally, involved in base excision repair of DNA damaged by oxidation or by mutagenic agents. Acts as a DNA glycosylase that recognizes and removes damaged bases. Has a preference for oxidized purines, such as 7,8-dihydro-8-oxoguanine (8-oxoG). Has AP (apurinic/apyrimidinic) lyase activity and introduces nicks in the DNA strand. Cleaves the DNA backbone by beta-delta elimination to generate a single-strand break at the site of the removed base with both 3'- and 5'-phosphates. The protein is Formamidopyrimidine-DNA glycosylase of Roseiflexus sp. (strain RS-1).